A 362-amino-acid chain; its full sequence is Bifunctional chorismate mutase/prephenate dehydratase (362 aa).

The region spanning 3 to 91 (QTIDELLIPH…ECLAVERPLT (89 aa)) is the Chorismate mutase domain. Substrate is bound by residues Arg-13, Arg-30, Lys-41, and Glu-52. A Prephenate dehydratase domain is found at 92–269 (IAYLGPQGTF…NTTRFLVMGH (178 aa)). An ACT domain is found at 281-356 (SLAVSAPNRA…RASFVKAIGS (76 aa)).

The protein resides in the cytoplasm. It carries out the reaction chorismate = prephenate. The catalysed reaction is prephenate + H(+) = 3-phenylpyruvate + CO2 + H2O. It functions in the pathway amino-acid biosynthesis; L-phenylalanine biosynthesis; phenylpyruvate from prephenate: step 1/1. Its pathway is metabolic intermediate biosynthesis; prephenate biosynthesis; prephenate from chorismate: step 1/1. Functionally, catalyzes the Claisen rearrangement of chorismate to prephenate and the decarboxylation/dehydration of prephenate to phenylpyruvate. The chain is Bifunctional chorismate mutase/prephenate dehydratase (pheA) from Neisseria gonorrhoeae (strain ATCC 700825 / FA 1090).